The primary structure comprises 534 residues: Cytochrome c oxidase subunit 1 (534 aa).

Residues 16–36 (VLYFIFAIFCGMAGTAMSLII) traverse the membrane as a helical segment. Glu39, Ala42, and Gly44 together coordinate Ca(2+). The next 6 membrane-spanning stretches (helical) occupy residues 57–77 (VLVV…ALIG), 101–121 (ISFW…LVES), 147–167 (AIFA…NFIV), 182–202 (LPLF…SLPV), 235–255 (LFWF…FGII), and 267–287 (VFGE…GFLV). Fe(II)-heme a is bound at residue His62. His241 lines the Cu cation pocket. Residues 241–245 (HPEVY) constitute a cross-link (1'-histidyl-3'-tyrosine (His-Tyr)). O2 is bound at residue Tyr245. Residues His290 and His291 each coordinate Cu cation. 2 helical membrane-spanning segments follow: residues 310–330 (MIIA…IYGG) and 338–358 (MLYA…GVAL). Mg(2+) contacts are provided by His368 and Asp369. 2 helical membrane passes run 372 to 392 (YVVG…LFAG) and 412 to 432 (IQFW…HFLG). A heme a3-binding site is contributed by His376. Position 378 (His378) interacts with Fe(II)-heme a. Pro441 lines the Ca(2+) pocket. A helical transmembrane segment spans residues 452 to 472 (YVASIGSIIAVFSLFLFIYIL).

It belongs to the heme-copper respiratory oxidase family. Component of the cytochrome c oxidase (complex IV, CIV), a multisubunit enzyme composed of a catalytic core of 3 subunits and several supernumerary subunits. The complex exists as a monomer or a dimer and forms supercomplexes (SCs) in the inner mitochondrial membrane with ubiquinol-cytochrome c oxidoreductase (cytochrome b-c1 complex, complex III, CIII). Heme serves as cofactor. It depends on Cu cation as a cofactor.

Its subcellular location is the mitochondrion inner membrane. It carries out the reaction 4 Fe(II)-[cytochrome c] + O2 + 8 H(+)(in) = 4 Fe(III)-[cytochrome c] + 2 H2O + 4 H(+)(out). Its pathway is energy metabolism; oxidative phosphorylation. Its function is as follows. Component of the cytochrome c oxidase, the last enzyme in the mitochondrial electron transport chain which drives oxidative phosphorylation. The respiratory chain contains 3 multisubunit complexes succinate dehydrogenase (complex II, CII), ubiquinol-cytochrome c oxidoreductase (cytochrome b-c1 complex, complex III, CIII) and cytochrome c oxidase (complex IV, CIV), that cooperate to transfer electrons derived from NADH and succinate to molecular oxygen, creating an electrochemical gradient over the inner membrane that drives transmembrane transport and the ATP synthase. Cytochrome c oxidase is the component of the respiratory chain that catalyzes the reduction of oxygen to water. Electrons originating from reduced cytochrome c in the intermembrane space (IMS) are transferred via the dinuclear copper A center (CU(A)) of subunit 2 and heme A of subunit 1 to the active site in subunit 1, a binuclear center (BNC) formed by heme A3 and copper B (CU(B)). The BNC reduces molecular oxygen to 2 water molecules using 4 electrons from cytochrome c in the IMS and 4 protons from the mitochondrial matrix. In Kluyveromyces lactis (strain ATCC 8585 / CBS 2359 / DSM 70799 / NBRC 1267 / NRRL Y-1140 / WM37) (Yeast), this protein is Cytochrome c oxidase subunit 1 (COX1).